The sequence spans 443 residues: Pyrrolysine--tRNA ligase (443 aa).

The interval 103-177 (VRKAMPKSVA…PAAPVPTSAP (75 aa)) is disordered. Over residues 131–177 (PAPATPVSAPAQAPAPSTGSASATSASAQRMANSAAAPAAPVPTSAP) the composition is skewed to low complexity.

Belongs to the class-II aminoacyl-tRNA synthetase family.

The protein localises to the cytoplasm. It carries out the reaction tRNA(Pyl) + L-pyrrolysine + ATP = L-pyrrolysyl-tRNA(Pyl) + AMP + diphosphate. Catalyzes the attachment of pyrrolysine to tRNA(Pyl). Pyrrolysine is a lysine derivative encoded by the termination codon UAG. This Methanosarcina acetivorans (strain ATCC 35395 / DSM 2834 / JCM 12185 / C2A) protein is Pyrrolysine--tRNA ligase.